The following is a 274-amino-acid chain: Bis(5'-nucleosyl)-tetraphosphatase, symmetrical (274 aa).

This sequence belongs to the Ap4A hydrolase family.

It carries out the reaction P(1),P(4)-bis(5'-adenosyl) tetraphosphate + H2O = 2 ADP + 2 H(+). Hydrolyzes diadenosine 5',5'''-P1,P4-tetraphosphate to yield ADP. In Shewanella baltica (strain OS195), this protein is Bis(5'-nucleosyl)-tetraphosphatase, symmetrical.